Here is a 172-residue protein sequence, read N- to C-terminus: Interferon tau-3 (172 aa).

Cystine bridges form between Cys1-Cys99 and Cys29-Cys139.

The protein belongs to the alpha/beta interferon family. IFN-alphaII subfamily. As to expression, constitutively and exclusively expressed in the mononuclear cells of the extraembryonic trophectoderm.

Its subcellular location is the secreted. In terms of biological role, paracrine hormone primarily responsible for maternal recognition of pregnancy. Interacts with endometrial receptors, probably type I interferon receptors, and blocks estrogen receptor expression, preventing the estrogen-induced increase in oxytocin receptor expression in the endometrium. This results in the suppression of the pulsatile endometrial release of the luteolytic hormone prostaglandin F2-alpha, hindering the regression of the corpus luteum (luteolysis) and therefore a return to ovarian cyclicity. This, and a possible direct effect of IFN-tau on prostaglandin synthesis, leads in turn to continued ovarian progesterone secretion, which stimulates the secretion by the endometrium of the nutrients required for the growth of the conceptus. In summary, displays particularly high antiviral and antiproliferative potency concurrently with particular weak cytotoxicity, high antiluteolytic activity and immunomodulatory properties. In contrast with other IFNs, IFN-tau is not virally inducible. The polypeptide is Interferon tau-3 (IFNT3) (Ovis aries (Sheep)).